The chain runs to 391 residues: Probable malate dehydrogenase 1 (391 aa).

68–74 (GAAGQIA) is an NAD(+) binding site. Substrate is bound by residues Arg-149 and Arg-155. NAD(+) is bound by residues Asn-162, Gln-169, and 186–188 (VGN). Substrate is bound by residues Asn-188 and Arg-219. The active-site Proton acceptor is His-244.

This sequence belongs to the LDH/MDH superfamily. MDH type 2 family. Homodimer.

It carries out the reaction (S)-malate + NAD(+) = oxaloacetate + NADH + H(+). In terms of biological role, catalyzes the reversible oxidation of malate to oxaloacetate. The polypeptide is Probable malate dehydrogenase 1 (mdhA) (Dictyostelium discoideum (Social amoeba)).